The chain runs to 586 residues: Pectinesterase 1 (586 aa).

The signal sequence occupies residues 1 to 49 (MDSVNSFKGYGKVDEAQDLALKKKTRKRLLLLSISVVVLIAVIIAAVVA). Residues Asn57, Asn97, Asn154, Asn201, and Asn207 are each glycosylated (N-linked (GlcNAc...) asparagine). An RRLM cleavage motif motif is present at residues 250-253 (RRLM). Positions 269–272 (RRLL) match the RRLL cleavage motif motif. Residues Thr355 and Gln385 each coordinate substrate. The active-site Proton donor is the Asp408. Cys422 and Cys442 are joined by a disulfide. Asp429 (nucleophile) is an active-site residue. Asn466 carries an N-linked (GlcNAc...) asparagine glycan. The substrate site is built by Arg492 and Trp494.

The protein in the N-terminal section; belongs to the PMEI family. It in the C-terminal section; belongs to the pectinesterase family. In terms of assembly, interacts with SBT6.1. Expressed in siliques.

The protein resides in the secreted. It is found in the cell wall. It localises to the golgi apparatus membrane. It carries out the reaction [(1-&gt;4)-alpha-D-galacturonosyl methyl ester](n) + n H2O = [(1-&gt;4)-alpha-D-galacturonosyl](n) + n methanol + n H(+). The protein operates within glycan metabolism; pectin degradation; 2-dehydro-3-deoxy-D-gluconate from pectin: step 1/5. Functionally, acts in the modification of cell walls via demethylesterification of cell wall pectin. Demethylates protein phosphatase 2A (PP2A) that have been reversibly carboxymethylated by LCMT1. Acts as a negative regulators of genes involved in salt stress response. The polypeptide is Pectinesterase 1 (PME1) (Arabidopsis thaliana (Mouse-ear cress)).